A 66-amino-acid chain; its full sequence is Large ribosomal subunit protein uL29 (66 aa).

The protein belongs to the universal ribosomal protein uL29 family.

This is Large ribosomal subunit protein uL29 from Francisella tularensis subsp. tularensis (strain FSC 198).